The chain runs to 264 residues: Phosphonates import ATP-binding protein PhnC (264 aa).

One can recognise an ABC transporter domain in the interval Leu-7–Phe-254. Gly-39–Ser-46 contacts ATP.

This sequence belongs to the ABC transporter superfamily. Phosphonates importer (TC 3.A.1.9.1) family. In terms of assembly, the complex is composed of two ATP-binding proteins (PhnC), two transmembrane proteins (PhnE) and a solute-binding protein (PhnD).

Its subcellular location is the cell inner membrane. The catalysed reaction is phosphonate(out) + ATP + H2O = phosphonate(in) + ADP + phosphate + H(+). In terms of biological role, part of the ABC transporter complex PhnCDE involved in phosphonates import. Responsible for energy coupling to the transport system. The sequence is that of Phosphonates import ATP-binding protein PhnC from Caulobacter vibrioides (strain ATCC 19089 / CIP 103742 / CB 15) (Caulobacter crescentus).